The sequence spans 284 residues: Nucleotide-binding protein NMCC_0698 (284 aa).

8–15 (GLSGSGKS) contributes to the ATP binding site. 58 to 61 (DVRS) is a binding site for GTP.

The protein belongs to the RapZ-like family.

Displays ATPase and GTPase activities. This Neisseria meningitidis serogroup C (strain 053442) protein is Nucleotide-binding protein NMCC_0698.